Reading from the N-terminus, the 118-residue chain is DNA-directed RNA polymerase subunit omega (118 aa).

The interval 78–104 (DEPEEDSMAMLMGGGQPDKPAEDDMSE) is disordered.

It belongs to the RNA polymerase subunit omega family. In terms of assembly, the RNAP catalytic core consists of 2 alpha, 1 beta, 1 beta' and 1 omega subunit. When a sigma factor is associated with the core the holoenzyme is formed, which can initiate transcription.

It carries out the reaction RNA(n) + a ribonucleoside 5'-triphosphate = RNA(n+1) + diphosphate. Functionally, promotes RNA polymerase assembly. Latches the N- and C-terminal regions of the beta' subunit thereby facilitating its interaction with the beta and alpha subunits. This is DNA-directed RNA polymerase subunit omega from Dinoroseobacter shibae (strain DSM 16493 / NCIMB 14021 / DFL 12).